Reading from the N-terminus, the 197-residue chain is Secreted RxLR effector protein 48 (197 aa).

The N-terminal stretch at 1-27 is a signal peptide; that stretch reads MCCVSWNWVLACTFLLIFLSWWNCCND. Positions 58-79 match the RxLR-dEER motif; the sequence is RLLRVNLAANAEVLTHEIEEEK.

This sequence belongs to the RxLR effector family.

The protein localises to the secreted. Its subcellular location is the host nucleus. It localises to the host cytoplasm. Its function is as follows. Secreted effector that completely suppresses the host cell death induced by cell death-inducing proteins. This chain is Secreted RxLR effector protein 48, found in Plasmopara viticola (Downy mildew of grapevine).